Reading from the N-terminus, the 426-residue chain is Glucose-6-phosphate isomerase (426 aa).

Glu282 acts as the Proton donor in catalysis. Catalysis depends on residues His303 and Lys419.

It belongs to the GPI family.

It is found in the cytoplasm. It catalyses the reaction alpha-D-glucose 6-phosphate = beta-D-fructose 6-phosphate. The protein operates within carbohydrate biosynthesis; gluconeogenesis. Its pathway is carbohydrate degradation; glycolysis; D-glyceraldehyde 3-phosphate and glycerone phosphate from D-glucose: step 2/4. Functionally, catalyzes the reversible isomerization of glucose-6-phosphate to fructose-6-phosphate. The sequence is that of Glucose-6-phosphate isomerase from Mycoplasmoides gallisepticum (strain R(low / passage 15 / clone 2)) (Mycoplasma gallisepticum).